The chain runs to 232 residues: E3 ubiquitin-protein ligase RNF125 (232 aa).

The segment covering 1 to 10 has biased composition (polar residues); that stretch reads MGSVLSSDSG. A disordered region spans residues 1-27; the sequence is MGSVLSSDSGKSAPPSATPRALERRGD. Residue G2 is the site of N-myristoyl glycine attachment. C37 and C40 together coordinate Zn(2+). An RING-type zinc finger spans residues 37-76; the sequence is CAVCLEVLHQPVRTRCGHVFCRSCIATSLKNNKWTCPYCR. Residues 43-45 form an interaction with the C2HC RNF-type zinc finger region; sequence VLH. 8 residues coordinate Zn(2+): C52, H54, C57, C60, C72, C75, C100, and C103. A C2HC RNF-type zinc finger spans residues 100–119; it reads CAECDTLVCLGEMRAHIRTC. The segment at 109-113 is interaction with the RING-type zinc finger; sequence LGEMR. H115 and C119 together coordinate Zn(2+). A linker region region spans residues 120–128; the sequence is QKYIDKYGP. The interval 210–224 is required for interaction with ubiquitin and for autoubiquitination; that stretch reads EEALIRRVLDRSLLE.

Interacts with UBE2D1. Interacts with VCP/p97; leading to recruit RNF125 to RIGI and promote ubiquitination of RIGI. In terms of processing, autoubiquitinated, leading to its subsequent proteasomal degradation.

It is found in the golgi apparatus membrane. It catalyses the reaction S-ubiquitinyl-[E2 ubiquitin-conjugating enzyme]-L-cysteine + [acceptor protein]-L-lysine = [E2 ubiquitin-conjugating enzyme]-L-cysteine + N(6)-ubiquitinyl-[acceptor protein]-L-lysine.. It functions in the pathway protein modification; protein ubiquitination. Its function is as follows. E3 ubiquitin-protein ligase that mediates ubiquitination and subsequent proteasomal degradation of target proteins, such as RIGI, MAVS/IPS1, IFIH1/MDA5, JAK1 and p53/TP53. Acts as a negative regulator of type I interferon production by mediating ubiquitination of RIGI at 'Lys-181', leading to RIGI degradation. Mediates ubiquitination and subsequent degradation of p53/TP53. Mediates ubiquitination and subsequent degradation of JAK1. Acts as a positive regulator of T-cell activation. This chain is E3 ubiquitin-protein ligase RNF125 (RNF125), found in Macaca fascicularis (Crab-eating macaque).